The following is a 311-amino-acid chain: MQENQELTKKEKYNIDKLQKRLRRNVGEAIADFNMIEEGDRIMVCLSGGKDSYTMLEILRNLQKSAPISFSLVAVNLDQKQPGFPEHILPAYLEQLGVEYKIVEENTYGIVKEKIPEGKTTCSLCSRLRRGILYRTATELGATKIALGHHRDDILQTLFLNMFYGGKMKGMPPKLMSDDGKHIVIRPLAYCREKDIERFSQAKGFPIIPCNLCGSQPNLQRQVIADMLRDWDKRYPGRIETMFSAMQNVVPSHLSDVNLFDFKGITHGSEVVDGGDLAFDREDIPLQPAGWQPEEEDARLDELRLNVVEVK.

Positions 47 to 52 (SGGKDS) match the PP-loop motif motif. [4Fe-4S] cluster is bound by residues cysteine 122, cysteine 125, and cysteine 213.

The protein belongs to the TtcA family. In terms of assembly, homodimer. Mg(2+) is required as a cofactor. [4Fe-4S] cluster serves as cofactor.

The protein localises to the cytoplasm. The catalysed reaction is cytidine(32) in tRNA + S-sulfanyl-L-cysteinyl-[cysteine desulfurase] + AH2 + ATP = 2-thiocytidine(32) in tRNA + L-cysteinyl-[cysteine desulfurase] + A + AMP + diphosphate + H(+). It functions in the pathway tRNA modification. Functionally, catalyzes the ATP-dependent 2-thiolation of cytidine in position 32 of tRNA, to form 2-thiocytidine (s(2)C32). The sulfur atoms are provided by the cysteine/cysteine desulfurase (IscS) system. This is tRNA-cytidine(32) 2-sulfurtransferase from Klebsiella pneumoniae subsp. pneumoniae (strain ATCC 700721 / MGH 78578).